Here is a 402-residue protein sequence, read N- to C-terminus: p-cumate 2,3-dioxygenase system, ferredoxin--NAD(+) reductase component (402 aa).

Positions 16, 51, 83, 131, and 275 each coordinate FAD.

Belongs to the FAD-dependent oxidoreductase family. In terms of assembly, the p-cumate 2,3-dioxygenase multicomponent enzyme system is composed of an electron transfer component and a dioxygenase component (iron sulfur protein (ISP)). The electron transfer component is composed of a ferredoxin reductase (CmtAa) and a ferredoxin (CmtAd), and the dioxygenase component is formed of a large alpha subunit (CmtAb) and a small beta subunit (CmtAc). FAD serves as cofactor.

It catalyses the reaction 2 reduced [2Fe-2S]-[ferredoxin] + NAD(+) + H(+) = 2 oxidized [2Fe-2S]-[ferredoxin] + NADH. It participates in aromatic compound metabolism; p-cumate degradation; acetaldehyde and pyruvate from p-cumate. Component of the p-cumate 2,3-dioxygenase multicomponent enzyme system which catalyzes the incorporation of both atoms of molecular oxygen into p-cumate to form cis-2,3-dihydroxy-2,3-dihydro-p-cumate. Ferredoxin reductase catalyzes the transfer of electrons from NADH to ferredoxin (CmtAd). This Pseudomonas putida (Arthrobacter siderocapsulatus) protein is p-cumate 2,3-dioxygenase system, ferredoxin--NAD(+) reductase component.